The following is a 309-amino-acid chain: Homoserine O-succinyltransferase (309 aa).

Catalysis depends on Cys142, which acts as the Acyl-thioester intermediate. Substrate is bound by residues Lys163 and Ser192. The Proton acceptor role is filled by His235. Glu237 is a catalytic residue. Substrate is bound at residue Arg249.

It belongs to the MetA family.

The protein resides in the cytoplasm. The catalysed reaction is L-homoserine + succinyl-CoA = O-succinyl-L-homoserine + CoA. It functions in the pathway amino-acid biosynthesis; L-methionine biosynthesis via de novo pathway; O-succinyl-L-homoserine from L-homoserine: step 1/1. Transfers a succinyl group from succinyl-CoA to L-homoserine, forming succinyl-L-homoserine. The sequence is that of Homoserine O-succinyltransferase from Pectobacterium carotovorum subsp. carotovorum (strain PC1).